The sequence spans 185 residues: Ribosome-recycling factor (185 aa).

It belongs to the RRF family.

Its subcellular location is the cytoplasm. In terms of biological role, responsible for the release of ribosomes from messenger RNA at the termination of protein biosynthesis. May increase the efficiency of translation by recycling ribosomes from one round of translation to another. The sequence is that of Ribosome-recycling factor from Zymomonas mobilis subsp. mobilis (strain ATCC 31821 / ZM4 / CP4).